The chain runs to 437 residues: Glutamyl-tRNA reductase (437 aa).

Substrate contacts are provided by residues 46–49, Ser97, 102–104, and Gln108; these read TCNR and EEQ. Catalysis depends on Cys47, which acts as the Nucleophile. Residue 177-182 coordinates NADP(+); sequence GAGEMG. The interval 410-437 is disordered; sequence NGRVSEGKDAKVEEGKPEVDVQRSKAES. Over residues 414–437 the composition is skewed to basic and acidic residues; that stretch reads SEGKDAKVEEGKPEVDVQRSKAES.

It belongs to the glutamyl-tRNA reductase family. As to quaternary structure, homodimer.

It catalyses the reaction (S)-4-amino-5-oxopentanoate + tRNA(Glu) + NADP(+) = L-glutamyl-tRNA(Glu) + NADPH + H(+). It participates in porphyrin-containing compound metabolism; protoporphyrin-IX biosynthesis; 5-aminolevulinate from L-glutamyl-tRNA(Glu): step 1/2. Functionally, catalyzes the NADPH-dependent reduction of glutamyl-tRNA(Glu) to glutamate 1-semialdehyde (GSA). The polypeptide is Glutamyl-tRNA reductase (Archaeoglobus fulgidus (strain ATCC 49558 / DSM 4304 / JCM 9628 / NBRC 100126 / VC-16)).